A 1035-amino-acid polypeptide reads, in one-letter code: Unconventional myosin IC (1035 aa).

In terms of domain architecture, Myosin motor spans 21–703; that stretch reads GVQDFVLLEN…TLFDTEDAYQ (683 aa). Residue 114 to 121 coordinates ATP; that stretch reads GESGSGKT. At Ser-304 the chain carries Phosphoserine. Thr-310 carries the phosphothreonine modification. The interval 578–600 is actin-binding; that stretch reads LNNLMDILMCKEPSYIRCIKPND. IQ domains lie at 696-728, 729-751, and 752-779; these read FDTE…KYLK, LRAQ…AAKK, and RREA…FNEE. One can recognise a TH1 domain in the interval 857–1035; sequence KNNYASSVST…KGHLVIIGTQ (179 aa).

It belongs to the TRAFAC class myosin-kinesin ATPase superfamily. Myosin family. In terms of assembly, binds F-actin. As to expression, in the embryo, expressed in gastric caeca, midgut cells of the proventriculus, and in the mid and hindgut. In the larval and adult gut brush border, expressed in the microvilli. Also expressed at high levels in follicle cells during oogenesis.

It is found in the cytoplasm. It localises to the cell cortex. The protein localises to the cell membrane. Functionally, unconventional myosin that functions as actin-based motor protein with ATPase activity. Binds to membranes enriched in phosphatidylinositol 4-5-bisphosphate, and can glide along actin filaments when anchored to a lipid bilayer. Functions as antagonist for Myo31DF, an unconventional myosin with an essential role in the establishment of body left-right asymmetry. This chain is Unconventional myosin IC (Myo61F), found in Drosophila melanogaster (Fruit fly).